The sequence spans 381 residues: Protein-glutamate methylesterase/protein-glutamine glutaminase (381 aa).

The Response regulatory domain occupies 20–138 (RVMVVDDSVV…EIAAADIFKH (119 aa)). Asp71 bears the 4-aspartylphosphate mark. The interval 154–176 (PAALASAREPEPRPIQATPVPAH) is disordered. The region spanning 183-373 (PFSTHAPRAL…PLQQIAPKLV (191 aa)) is the CheB-type methylesterase domain. Residues Ser197, His225, and Asp321 contribute to the active site.

The protein belongs to the CheB family. Post-translationally, phosphorylated by CheA. Phosphorylation of the N-terminal regulatory domain activates the methylesterase activity.

Its subcellular location is the cytoplasm. The catalysed reaction is [protein]-L-glutamate 5-O-methyl ester + H2O = L-glutamyl-[protein] + methanol + H(+). The enzyme catalyses L-glutaminyl-[protein] + H2O = L-glutamyl-[protein] + NH4(+). Functionally, involved in chemotaxis. Part of a chemotaxis signal transduction system that modulates chemotaxis in response to various stimuli. Catalyzes the demethylation of specific methylglutamate residues introduced into the chemoreceptors (methyl-accepting chemotaxis proteins or MCP) by CheR. Also mediates the irreversible deamidation of specific glutamine residues to glutamic acid. The chain is Protein-glutamate methylesterase/protein-glutamine glutaminase from Nitrobacter hamburgensis (strain DSM 10229 / NCIMB 13809 / X14).